The following is a 516-amino-acid chain: Cytochrome P450 93G1 (516 aa).

The helical transmembrane segment at 11-31 (LLGMGTTMGALALALVVVVVV) threads the bilayer. Position 454 (C454) interacts with heme.

The protein belongs to the cytochrome P450 family. Heme is required as a cofactor.

It is found in the membrane. The enzyme catalyses a flavanone + reduced [NADPH--hemoprotein reductase] + O2 = a flavone + oxidized [NADPH--hemoprotein reductase] + 2 H2O + H(+). It functions in the pathway secondary metabolite biosynthesis; flavonoid biosynthesis. Functionally, functions as a flavone synthase II (FNSII) that catalyzes the direct conversion of flavanones to flavones. In vitro, can convert naringenin and eriodictyol to apigenin and luteolin, respectively. Acts as a key branch point enzyme that channels flavanones to the biosynthesis of soluble tricin O-linked conjugates. This is Cytochrome P450 93G1 from Oryza sativa subsp. japonica (Rice).